The chain runs to 227 residues: Isopentenyl-diphosphate Delta-isomerase 1 (227 aa).

Lys36 contributes to the substrate binding site. His40 and His51 together coordinate Mg(2+). The Nudix hydrolase domain maps to 49–199 (LLHRAFSVFL…EIKLTPWFKI (151 aa)). 2 residues coordinate substrate: Arg70 and Lys74. Cys86 is an active-site residue. Ser87 contacts substrate. Residues Glu146 and Glu148 each coordinate Mg(2+). Glu148 is an active-site residue. N6-acetyllysine is present on Lys176. A Microbody targeting signal motif is present at residues 225-227 (HRL).

This sequence belongs to the IPP isomerase type 1 family. In terms of assembly, monomer. The cofactor is Mg(2+).

Its subcellular location is the peroxisome. The catalysed reaction is isopentenyl diphosphate = dimethylallyl diphosphate. Its pathway is isoprenoid biosynthesis; dimethylallyl diphosphate biosynthesis; dimethylallyl diphosphate from isopentenyl diphosphate: step 1/1. Catalyzes the 1,3-allylic rearrangement of the homoallylic substrate isopentenyl (IPP) to its highly electrophilic allylic isomer, dimethylallyl diphosphate (DMAPP). The polypeptide is Isopentenyl-diphosphate Delta-isomerase 1 (Idi1) (Mus musculus (Mouse)).